The following is a 285-amino-acid chain: Pantothenate synthetase (285 aa).

Position 30–37 (30–37 (MGNLHAGH)) interacts with ATP. The active-site Proton donor is the H37. Residue Q61 coordinates (R)-pantoate. Position 61 (Q61) interacts with beta-alanine. 149 to 152 (GEKD) is a binding site for ATP. Position 155 (Q155) interacts with (R)-pantoate. An ATP-binding site is contributed by 186–189 (LSSR).

It belongs to the pantothenate synthetase family. In terms of assembly, homodimer.

The protein localises to the cytoplasm. The enzyme catalyses (R)-pantoate + beta-alanine + ATP = (R)-pantothenate + AMP + diphosphate + H(+). It functions in the pathway cofactor biosynthesis; (R)-pantothenate biosynthesis; (R)-pantothenate from (R)-pantoate and beta-alanine: step 1/1. Its function is as follows. Catalyzes the condensation of pantoate with beta-alanine in an ATP-dependent reaction via a pantoyl-adenylate intermediate. The polypeptide is Pantothenate synthetase (Ectopseudomonas mendocina (strain ymp) (Pseudomonas mendocina)).